The following is a 338-amino-acid chain: MRILYWGTPAYAVPTLRQLHQAGHTIVGVVSQPDRRRGRGQQLVASAVKQEALNLNLPVFTPERIKKDSDCQAQLAALKADASVVVAFGQILPLEVLEQPPLGCWNGHGSLLPRWRGAAPIQWSILDGDAETGVGVMAMEEGLDTGPVLLERRLSIGLQDNAHALAEKLSGLTAELMVEAMPLIEAVGAGPTDERLHRLGVQHQAEASCYARMLCKQDYQIDWSNSALAIHRQVMGLYPGAQTSWNGKRLKLTQTEPLIDRLKDQLSPEAQELVGQWPTGGHAGGTVLACIQDLGLVVSSSGCPLLIREAQLEGKSRSRGQALVQQMAAAEQQSIGDN.

Position 110–113 (110–113 (SLLP)) interacts with (6S)-5,6,7,8-tetrahydrofolate.

This sequence belongs to the Fmt family.

The catalysed reaction is L-methionyl-tRNA(fMet) + (6R)-10-formyltetrahydrofolate = N-formyl-L-methionyl-tRNA(fMet) + (6S)-5,6,7,8-tetrahydrofolate + H(+). Its function is as follows. Attaches a formyl group to the free amino group of methionyl-tRNA(fMet). The formyl group appears to play a dual role in the initiator identity of N-formylmethionyl-tRNA by promoting its recognition by IF2 and preventing the misappropriation of this tRNA by the elongation apparatus. The sequence is that of Methionyl-tRNA formyltransferase from Parasynechococcus marenigrum (strain WH8102).